Consider the following 488-residue polypeptide: Fumarate hydratase (488 aa).

The (S)-malate site is built by Ser-105, Ser-147, Asn-148, Thr-194, and His-195. Residue His-195 is the Proton donor/acceptor of the active site. Ser-340 is a catalytic residue. (S)-malate is bound by residues Ser-341, Lys-346, and Asn-348.

The protein belongs to the class-II fumarase/aspartase family. Fumarase subfamily. Homotetramer.

The protein localises to the cytoplasm. The protein resides in the cytosol. It catalyses the reaction (S)-malate = fumarate + H2O. In terms of biological role, catalyzes the reversible stereospecific interconversion of fumarate to L-malate. Fumarate metabolism in the cytosol plays a role during urea cycle and arginine metabolism; fumarate being a by-product of the urea cycle and amino-acid catabolism. The chain is Fumarate hydratase from Schistosoma mansoni (Blood fluke).